The chain runs to 355 residues: Arginine kinase (355 aa).

Residues 8–90 (KLQAGFKKLE…FDPIIEDYHV (83 aa)) enclose the Phosphagen kinase N-terminal domain. 63–67 (GVGIY) serves as a coordination point for L-arginine. A Phosphagen kinase C-terminal domain is found at 118 to 355 (YVISTRVRCG…LQLIKMEKEM (238 aa)). Residues 121–125 (STRVR) and His184 contribute to the ATP site. Residue Glu224 coordinates L-arginine. Arg228 serves as a coordination point for ATP. An L-arginine-binding site is contributed by Cys270. Residues 279-283 (RASVH) and 308-313 (RGTRGE) contribute to the ATP site. Glu313 serves as a coordination point for L-arginine.

It belongs to the ATP:guanido phosphotransferase family. As to quaternary structure, monomer.

It carries out the reaction L-arginine + ATP = N(omega)-phospho-L-arginine + ADP + H(+). The sequence is that of Arginine kinase from Penaeus japonicus (Kuruma prawn).